Reading from the N-terminus, the 358-residue chain is tRNA-specific 2-thiouridylase MnmA (358 aa).

Residues 6 to 13 (AMSGGVDS) and Leu-32 contribute to the ATP site. Residue Cys-101 is the Nucleophile of the active site. Cys-101 and Cys-193 are oxidised to a cystine. An ATP-binding site is contributed by Gly-125. The interaction with tRNA stretch occupies residues 143–145 (KDQ). Catalysis depends on Cys-193, which acts as the Cysteine persulfide intermediate.

Belongs to the MnmA/TRMU family.

The protein localises to the cytoplasm. It carries out the reaction S-sulfanyl-L-cysteinyl-[protein] + uridine(34) in tRNA + AH2 + ATP = 2-thiouridine(34) in tRNA + L-cysteinyl-[protein] + A + AMP + diphosphate + H(+). In terms of biological role, catalyzes the 2-thiolation of uridine at the wobble position (U34) of tRNA, leading to the formation of s(2)U34. The sequence is that of tRNA-specific 2-thiouridylase MnmA from Mycobacterium avium (strain 104).